Consider the following 317-residue polypeptide: Ribosomal RNA small subunit methyltransferase H (317 aa).

S-adenosyl-L-methionine contacts are provided by residues 37-39 (AGH), Asp-56, Phe-85, Asp-106, and Gln-113.

Belongs to the methyltransferase superfamily. RsmH family.

The protein localises to the cytoplasm. The enzyme catalyses cytidine(1402) in 16S rRNA + S-adenosyl-L-methionine = N(4)-methylcytidine(1402) in 16S rRNA + S-adenosyl-L-homocysteine + H(+). Its function is as follows. Specifically methylates the N4 position of cytidine in position 1402 (C1402) of 16S rRNA. This Lactococcus lactis subsp. lactis (strain IL1403) (Streptococcus lactis) protein is Ribosomal RNA small subunit methyltransferase H.